A 282-amino-acid polypeptide reads, in one-letter code: Pantothenate synthetase (282 aa).

ATP is bound at residue 30 to 37 (MGYLHEGH). H37 functions as the Proton donor in the catalytic mechanism. Residue Q61 participates in (R)-pantoate binding. Q61 provides a ligand contact to beta-alanine. 147–150 (GEKD) is an ATP binding site. Q153 serves as a coordination point for (R)-pantoate. ATP-binding positions include I176 and 184–187 (KSSR).

It belongs to the pantothenate synthetase family. As to quaternary structure, homodimer.

The protein localises to the cytoplasm. The catalysed reaction is (R)-pantoate + beta-alanine + ATP = (R)-pantothenate + AMP + diphosphate + H(+). Its pathway is cofactor biosynthesis; (R)-pantothenate biosynthesis; (R)-pantothenate from (R)-pantoate and beta-alanine: step 1/1. Catalyzes the condensation of pantoate with beta-alanine in an ATP-dependent reaction via a pantoyl-adenylate intermediate. The protein is Pantothenate synthetase of Enterococcus faecalis (strain ATCC 700802 / V583).